A 436-amino-acid polypeptide reads, in one-letter code: MSDTHLSTQKFADFPLHKEVHQALNEAGFEFCTPIQALSLPILLEKKDIAGQAQTGTGKTLAFLVATFNHLLSTPIPAERQLNQPRAIIMAPTRELAIQIAKDANLLAKHTGLKVGIVYGGEGYEVQRKVLDKGVDILIGTTGRIIDYVRQGVINVSCIQAVVLDEADRMFDLGFIKDIRFLFRRMPDAKSRLNMLFSATLSMKVQELAYDHMNEPEKVEIAPNEKTSKNIKEEIFYPSMEEKMPLLLSLLEEDWPEKAIVFSNTKHSCEKVWSWLEGDGHRAGLLTGDVPQKKRLRILEQFTKGEIDILVATDVAARGLHIADVSHVYNYDLPDDCEDYVHRIGRTGRAGQKGISVSFACEEYALNLPAIESYIQHSIPVTSYDSDALLDDIPPPVRIHRKPSTHTRNTRDRGASRPQGGQRSGPRRHDRTRRHS.

Positions 9–37 (QKFADFPLHKEVHQALNEAGFEFCTPIQA) match the Q motif motif. The 180-residue stretch at 40–219 (LPILLEKKDI…YDHMNEPEKV (180 aa)) folds into the Helicase ATP-binding domain. ATP is bound at residue 53–60 (AQTGTGKT). A DEAD box motif is present at residues 165–168 (DEAD). In terms of domain architecture, Helicase C-terminal spans 243–390 (KMPLLLSLLE…VTSYDSDALL (148 aa)). Residues 392 to 436 (DIPPPVRIHRKPSTHTRNTRDRGASRPQGGQRSGPRRHDRTRRHS) are disordered. The span at 425-436 (GPRRHDRTRRHS) shows a compositional bias: basic residues.

The protein belongs to the DEAD box helicase family. RhlB subfamily. Component of the RNA degradosome, which is a multiprotein complex involved in RNA processing and mRNA degradation.

The protein resides in the cytoplasm. It carries out the reaction ATP + H2O = ADP + phosphate + H(+). Its function is as follows. DEAD-box RNA helicase involved in RNA degradation. Has RNA-dependent ATPase activity and unwinds double-stranded RNA. This is ATP-dependent RNA helicase RhlB from Shewanella halifaxensis (strain HAW-EB4).